We begin with the raw amino-acid sequence, 1070 residues long: DNA-directed RNA polymerase subunit beta (1070 aa).

This sequence belongs to the RNA polymerase beta chain family. As to quaternary structure, in plastids the minimal PEP RNA polymerase catalytic core is composed of four subunits: alpha, beta, beta', and beta''. When a (nuclear-encoded) sigma factor is associated with the core the holoenzyme is formed, which can initiate transcription.

It localises to the plastid. The protein localises to the chloroplast. The enzyme catalyses RNA(n) + a ribonucleoside 5'-triphosphate = RNA(n+1) + diphosphate. Its function is as follows. DNA-dependent RNA polymerase catalyzes the transcription of DNA into RNA using the four ribonucleoside triphosphates as substrates. This Chaetosphaeridium globosum (Charophycean green alga) protein is DNA-directed RNA polymerase subunit beta.